The sequence spans 698 residues: UvrABC system protein B (698 aa).

One can recognise a Helicase ATP-binding domain in the interval Ala-35 to Glu-210. Gly-48–Ser-55 is an ATP binding site. Positions Tyr-101–Ile-124 match the Beta-hairpin motif. The Helicase C-terminal domain occupies Gln-438–Thr-604. The UVR domain occupies Ala-654–Glu-689.

The protein belongs to the UvrB family. As to quaternary structure, forms a heterotetramer with UvrA during the search for lesions. Interacts with UvrC in an incision complex.

It localises to the cytoplasm. Its function is as follows. The UvrABC repair system catalyzes the recognition and processing of DNA lesions. A damage recognition complex composed of 2 UvrA and 2 UvrB subunits scans DNA for abnormalities. Upon binding of the UvrA(2)B(2) complex to a putative damaged site, the DNA wraps around one UvrB monomer. DNA wrap is dependent on ATP binding by UvrB and probably causes local melting of the DNA helix, facilitating insertion of UvrB beta-hairpin between the DNA strands. Then UvrB probes one DNA strand for the presence of a lesion. If a lesion is found the UvrA subunits dissociate and the UvrB-DNA preincision complex is formed. This complex is subsequently bound by UvrC and the second UvrB is released. If no lesion is found, the DNA wraps around the other UvrB subunit that will check the other stand for damage. In Beutenbergia cavernae (strain ATCC BAA-8 / DSM 12333 / CCUG 43141 / JCM 11478 / NBRC 16432 / NCIMB 13614 / HKI 0122), this protein is UvrABC system protein B.